Here is a 1305-residue protein sequence, read N- to C-terminus: Contactin-associated protein like 5-3 (1305 aa).

The signal sequence occupies residues methionine 1–threonine 24. Positions alanine 25–cysteine 174 constitute an F5/8 type C domain. Residues alanine 25–aspartate 1235 are Extracellular-facing. Laminin G-like domains lie at valine 180–cysteine 360 and proline 367–cysteine 544. The N-linked (GlcNAc...) asparagine glycan is linked to asparagine 282. Residues cysteine 329 and cysteine 360 are joined by a disulfide bond. N-linked (GlcNAc...) asparagine glycosylation is present at asparagine 496. Cystine bridges form between cysteine 512-cysteine 544, cysteine 550-cysteine 561, and cysteine 555-cysteine 570. Positions isoleucine 546 to histidine 583 constitute an EGF-like 1 domain. N-linked (GlcNAc...) asparagine glycosylation is present at asparagine 571. Cysteines 572 and 582 form a disulfide. One can recognise a Fibrinogen C-terminal domain in the interval aspartate 584–tryptophan 790. The region spanning asparagine 791–cysteine 956 is the Laminin G-like 3 domain. 4 disulfides stabilise this stretch: cysteine 929/cysteine 956, cysteine 960/cysteine 973, cysteine 967/cysteine 982, and cysteine 984/cysteine 994. Residues proline 957–glutamine 995 enclose the EGF-like 2 domain. Residues glutamine 1013–cysteine 1198 form the Laminin G-like 4 domain. N-linked (GlcNAc...) asparagine glycosylation is found at asparagine 1023 and asparagine 1057. The cysteines at positions 1163 and 1198 are disulfide-linked. Residues leucine 1236–isoleucine 1256 traverse the membrane as a helical segment. Residues methionine 1257 to isoleucine 1305 are Cytoplasmic-facing.

This sequence belongs to the neurexin family. In terms of tissue distribution, expressed in brain.

The protein localises to the membrane. In terms of biological role, may play a role in the correct development and proper functioning of the peripheral and central nervous system and be involved in cell adhesion and intercellular communication. The chain is Contactin-associated protein like 5-3 (Cntnap5c) from Mus musculus (Mouse).